The sequence spans 113 residues: U11-theraphotoxin-Hhn1a (113 aa).

Residues 1–21 (MNTVRVAFLLVFVLAVSLGQA) form the signal peptide. The propeptide occupies 22–74 (DKDENRMEMQEKTEQGKSYLDFAENLLLQKLEELEAKLLEEDSEESRNSRQKR). Residues 61–83 (EEDSEESRNSRQKRCIGEGVPCD) are disordered. Intrachain disulfides connect Cys-75/Cys-90, Cys-82/Cys-95, and Cys-89/Cys-110.

Belongs to the neurotoxin 14 (magi-1) family. 01 (HNTX-16) subfamily. In terms of tissue distribution, expressed by the venom gland.

The protein resides in the secreted. Probable ion channel inhibitor. The polypeptide is U11-theraphotoxin-Hhn1a (Cyriopagopus hainanus (Chinese bird spider)).